The chain runs to 549 residues: Glucose-6-phosphate isomerase (549 aa).

The Proton donor role is filled by glutamate 353. Residues histidine 384 and lysine 512 contribute to the active site.

This sequence belongs to the GPI family.

It localises to the cytoplasm. It catalyses the reaction alpha-D-glucose 6-phosphate = beta-D-fructose 6-phosphate. Its pathway is carbohydrate biosynthesis; gluconeogenesis. The protein operates within carbohydrate degradation; glycolysis; D-glyceraldehyde 3-phosphate and glycerone phosphate from D-glucose: step 2/4. Functionally, catalyzes the reversible isomerization of glucose-6-phosphate to fructose-6-phosphate. In Alteromonas mediterranea (strain DSM 17117 / CIP 110805 / LMG 28347 / Deep ecotype), this protein is Glucose-6-phosphate isomerase.